The sequence spans 396 residues: Inositol polyphosphate multikinase (396 aa).

Low complexity predominate over residues 1–13; the sequence is MAAEPPALRLRPP. Positions 1–22 are disordered; sequence MAAEPPALRLRPPGSTGDSPPV. Ala2 bears the N-acetylalanine mark. Ser19 carries the post-translational modification Phosphoserine. Lys58 is a binding site for ATP. Arg65 serves as a coordination point for substrate. Residues 114 to 116 and Asp127 contribute to the ATP site; that span reads EDV. Substrate is bound by residues Lys129, 143–150, and Gln179; that span reads KIQQQVSK. A Nuclear localization signal motif is present at residues 300-310; the sequence is RHRKLYAKKHQ. Asp365 contacts ATP.

The protein belongs to the inositol phosphokinase (IPK) family. Requires Mg(2+) as cofactor.

The protein localises to the nucleus. The enzyme catalyses 1D-myo-inositol 1,4,5-trisphosphate + 2 ATP = 1D-myo-inositol 1,3,4,5,6-pentakisphosphate + 2 ADP + 2 H(+). It carries out the reaction 1D-myo-inositol 1,3,4,6-tetrakisphosphate + ATP = 1D-myo-inositol 1,3,4,5,6-pentakisphosphate + ADP + H(+). It catalyses the reaction 1-octadecanoyl-2-(5Z,8Z,11Z,14Z)-eicosatetraenoyl-sn-glycero-3-phospho-1D-myo-inositol 4,5-bisphosphate + ATP = 1-octadecanoyl-2-(5Z,8Z,11Z,14Z-eicosatetraenoyl)-sn-glycero-3-phospho-(1D-myo-inositol 3,4,5-triphosphate) + ADP + H(+). The catalysed reaction is a 1,2-diacyl-sn-glycero-3-phospho-(1D-myo-inositol-4,5-bisphosphate) + ATP = a 1,2-diacyl-sn-glycero-3-phospho-(1D-myo-inositol-3,4,5-trisphosphate) + ADP + H(+). The enzyme catalyses 1D-myo-inositol 1,4,5,6-tetrakisphosphate + ATP = 1D-myo-inositol 1,3,4,5,6-pentakisphosphate + ADP + H(+). The protein operates within phospholipid metabolism; phosphatidylinositol metabolism. Its function is as follows. Inositol phosphate kinase with a broad substrate specificity. Phosphorylates inositol 1,4,5-trisphosphate (Ins(1,4,5)P3) first to inositol 1,3,4,5-tetrakisphosphate and then to inositol 1,3,4,5,6-pentakisphosphate (Ins(1,3,4,5,6)P5). Phosphorylates inositol 1,3,4,6-tetrakisphosphate (Ins(1,3,4,6)P4). Phosphorylates inositol 1,4,5,6-tetrakisphosphate (Ins(1,4,5,6)P4). Phosphorylates glycero-3-phospho-1D-myo-inositol 4,5-bisphosphate to glycero-3-phospho-1D-myo-inositol 3,4,5-trisphosphate. Plays an important role in MLKL-mediated necroptosis via its role in the biosynthesis of inositol pentakisphosphate (InsP5) and inositol hexakisphosphate (InsP6). Binding of these highly phosphorylated inositol phosphates to MLKL mediates the release of an N-terminal auto-inhibitory region, leading to activation of the kinase. Essential for activated phospho-MLKL to oligomerize and localize to the cell membrane during necroptosis. Required for normal embryonic development, probably via its role in the biosynthesis of inositol 1,3,4,5,6-pentakisphosphate (Ins(1,3,4,5,6)P5) and inositol hexakisphosphate (InsP6). In Mus musculus (Mouse), this protein is Inositol polyphosphate multikinase (Ipmk).